Reading from the N-terminus, the 443-residue chain is ATP-dependent protease ATPase subunit HslU (443 aa).

Residues Ile-20, 62–67 (GVGKTE), Asp-255, Glu-321, and Arg-393 contribute to the ATP site.

The protein belongs to the ClpX chaperone family. HslU subfamily. In terms of assembly, a double ring-shaped homohexamer of HslV is capped on each side by a ring-shaped HslU homohexamer. The assembly of the HslU/HslV complex is dependent on binding of ATP.

It is found in the cytoplasm. ATPase subunit of a proteasome-like degradation complex; this subunit has chaperone activity. The binding of ATP and its subsequent hydrolysis by HslU are essential for unfolding of protein substrates subsequently hydrolyzed by HslV. HslU recognizes the N-terminal part of its protein substrates and unfolds these before they are guided to HslV for hydrolysis. This Helicobacter pylori (strain J99 / ATCC 700824) (Campylobacter pylori J99) protein is ATP-dependent protease ATPase subunit HslU.